The following is a 251-amino-acid chain: Flap endonuclease Xni (251 aa).

D104 lines the Mg(2+) pocket. The 5'-3' exonuclease domain occupies 160 to 249; that stretch reads VTPEQLADYW…LDGNLQQLRL (90 aa). K(+)-binding residues include L171, A172, P180, V182, and I185. Residues 184 to 189 form an interaction with DNA region; that stretch reads GIGPKS.

Belongs to the Xni family. Mg(2+) is required as a cofactor. K(+) serves as cofactor.

In terms of biological role, has flap endonuclease activity. During DNA replication, flap endonucleases cleave the 5'-overhanging flap structure that is generated by displacement synthesis when DNA polymerase encounters the 5'-end of a downstream Okazaki fragment. This is Flap endonuclease Xni from Klebsiella pneumoniae subsp. pneumoniae (strain ATCC 700721 / MGH 78578).